The chain runs to 385 residues: S-adenosylmethionine synthase (385 aa).

His-15 lines the ATP pocket. A Mg(2+)-binding site is contributed by Asp-17. Glu-43 serves as a coordination point for K(+). L-methionine-binding residues include Glu-56 and Gln-99. A flexible loop region spans residues 99 to 109 (QSVDIAQGVDR). ATP-binding positions include 164–166 (DAK), 230–231 (RF), Asp-239, 245–246 (RK), and Lys-266. Asp-239 is an L-methionine binding site. Lys-270 contributes to the L-methionine binding site.

This sequence belongs to the AdoMet synthase family. In terms of assembly, homotetramer; dimer of dimers. The cofactor is Mg(2+). It depends on K(+) as a cofactor.

The protein resides in the cytoplasm. The catalysed reaction is L-methionine + ATP + H2O = S-adenosyl-L-methionine + phosphate + diphosphate. Its pathway is amino-acid biosynthesis; S-adenosyl-L-methionine biosynthesis; S-adenosyl-L-methionine from L-methionine: step 1/1. Catalyzes the formation of S-adenosylmethionine (AdoMet) from methionine and ATP. The overall synthetic reaction is composed of two sequential steps, AdoMet formation and the subsequent tripolyphosphate hydrolysis which occurs prior to release of AdoMet from the enzyme. This Alkalilimnicola ehrlichii (strain ATCC BAA-1101 / DSM 17681 / MLHE-1) protein is S-adenosylmethionine synthase.